Reading from the N-terminus, the 444-residue chain is Tol-Pal system protein TolB (444 aa).

The first 19 residues, 1–19 (MRNIIYFILSLLFSFASYA), serve as a signal peptide directing secretion.

This sequence belongs to the TolB family. The Tol-Pal system is composed of five core proteins: the inner membrane proteins TolA, TolQ and TolR, the periplasmic protein TolB and the outer membrane protein Pal. They form a network linking the inner and outer membranes and the peptidoglycan layer.

The protein resides in the periplasm. Functionally, part of the Tol-Pal system, which plays a role in outer membrane invagination during cell division and is important for maintaining outer membrane integrity. This is Tol-Pal system protein TolB from Rickettsia massiliae (strain Mtu5).